We begin with the raw amino-acid sequence, 475 residues long: Ribulose bisphosphate carboxylase large chain (475 aa).

Residues 1–2 constitute a propeptide that is removed on maturation; it reads MS. Residue Pro3 is modified to N-acetylproline. Residue Lys14 is modified to N6,N6,N6-trimethyllysine. Substrate contacts are provided by Asn123 and Thr173. Lys175 serves as the catalytic Proton acceptor. Lys177 serves as a coordination point for substrate. Lys201, Asp203, and Glu204 together coordinate Mg(2+). An N6-carboxylysine modification is found at Lys201. Residue His294 is the Proton acceptor of the active site. Substrate contacts are provided by Arg295, His327, and Ser379.

The protein belongs to the RuBisCO large chain family. Type I subfamily. As to quaternary structure, heterohexadecamer of 8 large chains and 8 small chains. Requires Mg(2+) as cofactor.

Its subcellular location is the plastid. It carries out the reaction 2 (2R)-3-phosphoglycerate + 2 H(+) = D-ribulose 1,5-bisphosphate + CO2 + H2O. The catalysed reaction is D-ribulose 1,5-bisphosphate + O2 = 2-phosphoglycolate + (2R)-3-phosphoglycerate + 2 H(+). RuBisCO catalyzes two reactions: the carboxylation of D-ribulose 1,5-bisphosphate, the primary event in carbon dioxide fixation, as well as the oxidative fragmentation of the pentose substrate in the photorespiration process. Both reactions occur simultaneously and in competition at the same active site. The sequence is that of Ribulose bisphosphate carboxylase large chain from Aneura mirabilis (Parasitic liverwort).